Here is a 102-residue protein sequence, read N- to C-terminus: NADH-quinone oxidoreductase subunit K (102 aa).

Helical transmembrane passes span 5-25 (LGHY…GIFL), 31-51 (IVLL…FVAF), and 62-82 (VFVF…LAIL).

This sequence belongs to the complex I subunit 4L family. As to quaternary structure, NDH-1 is composed of 14 different subunits. Subunits NuoA, H, J, K, L, M, N constitute the membrane sector of the complex.

Its subcellular location is the cell inner membrane. It carries out the reaction a quinone + NADH + 5 H(+)(in) = a quinol + NAD(+) + 4 H(+)(out). Functionally, NDH-1 shuttles electrons from NADH, via FMN and iron-sulfur (Fe-S) centers, to quinones in the respiratory chain. The immediate electron acceptor for the enzyme in this species is believed to be ubiquinone. Couples the redox reaction to proton translocation (for every two electrons transferred, four hydrogen ions are translocated across the cytoplasmic membrane), and thus conserves the redox energy in a proton gradient. The sequence is that of NADH-quinone oxidoreductase subunit K from Methylibium petroleiphilum (strain ATCC BAA-1232 / LMG 22953 / PM1).